A 197-amino-acid chain; its full sequence is Recombination protein RecR (197 aa).

Residues 56 to 71 (CSRCFNLSAEDPCDIC) form a C4-type zinc finger. Positions 79 to 174 (ETICVVAEPR…RVTRIAFGLP (96 aa)) constitute a Toprim domain.

It belongs to the RecR family.

May play a role in DNA repair. It seems to be involved in an RecBC-independent recombinational process of DNA repair. It may act with RecF and RecO. The protein is Recombination protein RecR of Gloeobacter violaceus (strain ATCC 29082 / PCC 7421).